The following is a 356-amino-acid chain: MFS-type transporter tazK (356 aa).

Helical transmembrane passes span L12–H32, F42–F62, G69–T89, M102–L122, I178–V198, G211–F231, L257–T277, I288–Y308, and A320–P340.

This sequence belongs to the major facilitator superfamily. CAR1 family.

Its subcellular location is the membrane. Its function is as follows. MFS-type transporter; part of the gene cluster that mediates the biosynthesis of azaterrilone A and other azaphilones, a class of fungal metabolites characterized by a highly oxygenated pyrano-quinone bicyclic core and exhibiting a broad range of bioactivities. The protein is MFS-type transporter tazK of Aspergillus terreus (strain NIH 2624 / FGSC A1156).